Here is a 417-residue protein sequence, read N- to C-terminus: UDP-N-acetylglucosamine 1-carboxyvinyltransferase (417 aa).

22-23 (KN) is a binding site for phosphoenolpyruvate. Arginine 92 is a binding site for UDP-N-acetyl-alpha-D-glucosamine. Cysteine 116 serves as the catalytic Proton donor. Cysteine 116 is subject to 2-(S-cysteinyl)pyruvic acid O-phosphothioketal. UDP-N-acetyl-alpha-D-glucosamine-binding positions include 161-164 (KVSV), aspartate 305, and isoleucine 327.

It belongs to the EPSP synthase family. MurA subfamily.

It localises to the cytoplasm. The catalysed reaction is phosphoenolpyruvate + UDP-N-acetyl-alpha-D-glucosamine = UDP-N-acetyl-3-O-(1-carboxyvinyl)-alpha-D-glucosamine + phosphate. Its pathway is cell wall biogenesis; peptidoglycan biosynthesis. In terms of biological role, cell wall formation. Adds enolpyruvyl to UDP-N-acetylglucosamine. The chain is UDP-N-acetylglucosamine 1-carboxyvinyltransferase from Pelagibacter ubique (strain HTCC1062).